Reading from the N-terminus, the 263-residue chain is Glucosamine-6-phosphate deaminase 2 (263 aa).

Asp-82 functions as the Proton acceptor; for enolization step in the catalytic mechanism. Residue Asn-151 is the For ring-opening step of the active site. His-153 functions as the Proton acceptor; for ring-opening step in the catalytic mechanism. Glu-158 functions as the For ring-opening step in the catalytic mechanism.

Belongs to the glucosamine/galactosamine-6-phosphate isomerase family. In terms of assembly, homohexamer.

The catalysed reaction is alpha-D-glucosamine 6-phosphate + H2O = beta-D-fructose 6-phosphate + NH4(+). Its function is as follows. Catalyzes the reversible conversion of alpha-D-glucosamine 6-phosphate (GlcN-6P) into beta-D-fructose 6-phosphate (Fru-6P) and ammonium ion, a regulatory reaction step in de novo uridine diphosphate-N-acetyl-alpha-D-glucosamine (UDP-GlcNAc) biosynthesis via hexosamine pathway. The sequence is that of Glucosamine-6-phosphate deaminase 2 (GPI2) from Giardia intestinalis (Giardia lamblia).